The sequence spans 218 residues: Serine/threonine-protein phosphatase 1 (218 aa).

Mn(2+)-binding residues include aspartate 24, histidine 26, aspartate 53, and asparagine 79. Catalysis depends on histidine 80, which acts as the Proton donor. A Mn(2+)-binding site is contributed by histidine 187.

Belongs to the PPP phosphatase family. PP-1 subfamily. Requires Mn(2+) as cofactor.

The enzyme catalyses O-phospho-L-seryl-[protein] + H2O = L-seryl-[protein] + phosphate. It catalyses the reaction O-phospho-L-threonyl-[protein] + H2O = L-threonyl-[protein] + phosphate. Functionally, plays a key role in signaling protein misfolding via the CpxR/CPXA transducing system. It also modulates the phosphorylated status of many phosphoproteins in E.coli, some of which acting as major chaperones. Has been shown, in vitro, to act on Ser, Thr and Tyr-phosphorylated substrates. This is Serine/threonine-protein phosphatase 1 (pphA) from Escherichia coli (strain K12).